The sequence spans 115 residues: T cell receptor beta variable 7-2 (115 aa).

Residues 1-21 (MGTRLLFWVAFCLLGADHTGA) form the signal peptide. Positions 22–115 (GVSQSPSNKV…SAVYLCASSL (94 aa)) constitute an Ig-like domain. The cysteines at positions 42 and 111 are disulfide-linked.

In terms of assembly, alpha-beta TR is a heterodimer composed of an alpha and beta chain; disulfide-linked. The alpha-beta TR is associated with the transmembrane signaling CD3 coreceptor proteins to form the TR-CD3 (TcR or TCR). The assembly of alpha-beta TR heterodimers with CD3 occurs in the endoplasmic reticulum where a single alpha-beta TR heterodimer associates with one CD3D-CD3E heterodimer, one CD3G-CD3E heterodimer and one CD247 homodimer forming a stable octameric structure. CD3D-CD3E and CD3G-CD3E heterodimers preferentially associate with TR alpha and TR beta chains, respectively. The association of the CD247 homodimer is the last step of TcR assembly in the endoplasmic reticulum and is required for transport to the cell surface.

Its subcellular location is the cell membrane. Functionally, v region of the variable domain of T cell receptor (TR) beta chain that participates in the antigen recognition. Alpha-beta T cell receptors are antigen specific receptors which are essential to the immune response and are present on the cell surface of T lymphocytes. Recognize peptide-major histocompatibility (MH) (pMH) complexes that are displayed by antigen presenting cells (APC), a prerequisite for efficient T cell adaptive immunity against pathogens. Binding of alpha-beta TR to pMH complex initiates TR-CD3 clustering on the cell surface and intracellular activation of LCK that phosphorylates the ITAM motifs of CD3G, CD3D, CD3E and CD247 enabling the recruitment of ZAP70. In turn ZAP70 phosphorylates LAT, which recruits numerous signaling molecules to form the LAT signalosome. The LAT signalosome propagates signal branching to three major signaling pathways, the calcium, the mitogen-activated protein kinase (MAPK) kinase and the nuclear factor NF-kappa-B (NF-kB) pathways, leading to the mobilization of transcription factors that are critical for gene expression and essential for T cell growth and differentiation. The T cell repertoire is generated in the thymus, by V-(D)-J rearrangement. This repertoire is then shaped by intrathymic selection events to generate a peripheral T cell pool of self-MH restricted, non-autoaggressive T cells. Post-thymic interaction of alpha-beta TR with the pMH complexes shapes TR structural and functional avidity. This chain is T cell receptor beta variable 7-2, found in Homo sapiens (Human).